Reading from the N-terminus, the 151-residue chain is Deoxyuridine 5'-triphosphate nucleotidohydrolase (151 aa).

Substrate-binding positions include 69 to 71, Asn82, and 86 to 88; these read RSG and TID.

Belongs to the dUTPase family. Mg(2+) serves as cofactor.

It carries out the reaction dUTP + H2O = dUMP + diphosphate + H(+). It participates in pyrimidine metabolism; dUMP biosynthesis; dUMP from dCTP (dUTP route): step 2/2. In terms of biological role, this enzyme is involved in nucleotide metabolism: it produces dUMP, the immediate precursor of thymidine nucleotides and it decreases the intracellular concentration of dUTP so that uracil cannot be incorporated into DNA. This chain is Deoxyuridine 5'-triphosphate nucleotidohydrolase, found in Rhodospirillum centenum (strain ATCC 51521 / SW).